A 314-amino-acid polypeptide reads, in one-letter code: MATNKFFKSLLFALTIAINSFGFCIQDAVAYPVFAQQNYSNPRAANGKLACANCHLNQKAIEIEAPQAVLPNSIFEVEIKVPYDTTKQQLGANGKKADLNVGGILMLPEGFKLAPKNQIPAEVKEKNKGVFISPYSSEFDNILVVGPIAGKTHQELIFPVMAPDPEKNSDIKYLTYPFYAGGNRGRGQVYPTGEKSNVNVFGANQSGQITEITVTEKGESTILILNSNGKQTSQVLPAGLILSIKQGQVVKADQPLNIDPNVGGFGQEESEIVLQNPIRIYGYLAFCFSVLITQIMLVLKKKQFEKVQAAELNF.

The first 30 residues, 1–30, serve as a signal peptide directing secretion; the sequence is MATNKFFKSLLFALTIAINSFGFCIQDAVA. Heme-binding residues include tyrosine 31, cysteine 51, cysteine 54, and histidine 55. Residues 280–300 form a helical membrane-spanning segment; the sequence is IYGYLAFCFSVLITQIMLVLK.

This sequence belongs to the cytochrome f family. The 4 large subunits of the cytochrome b6-f complex are cytochrome b6, subunit IV (17 kDa polypeptide, petD), cytochrome f and the Rieske protein, while the 4 small subunits are PetG, PetL, PetM and PetN. The complex functions as a dimer. The cofactor is heme.

The protein resides in the plastid. It is found in the chloroplast thylakoid membrane. In terms of biological role, component of the cytochrome b6-f complex, which mediates electron transfer between photosystem II (PSII) and photosystem I (PSI), cyclic electron flow around PSI, and state transitions. In Phaeodactylum tricornutum (strain CCAP 1055/1), this protein is Cytochrome f.